A 254-amino-acid chain; its full sequence is DNA repair protein RecO (254 aa).

The protein belongs to the RecO family.

Functionally, involved in DNA repair and RecF pathway recombination. The protein is DNA repair protein RecO of Agrobacterium fabrum (strain C58 / ATCC 33970) (Agrobacterium tumefaciens (strain C58)).